A 1071-amino-acid chain; its full sequence is Carbamoyl phosphate synthase large chain (1071 aa).

The carboxyphosphate synthetic domain stretch occupies residues 1 to 403; it reads MPKRTDLKSI…SFQKALRGLE (403 aa). ATP contacts are provided by Arg-129, Arg-169, Gly-175, Gly-176, Gln-208, Val-210, Glu-215, Gly-241, Val-242, His-243, Gln-285, and Glu-299. The 196-residue stretch at 133–328 folds into the ATP-grasp 1 domain; sequence KEAMEKIGLS…IAKVAAKLAV (196 aa). Mg(2+)-binding residues include Gln-285, Glu-299, and Asn-301. Gln-285, Glu-299, and Asn-301 together coordinate Mn(2+). The tract at residues 404 to 548 is oligomerization domain; sequence TGLCGFNPRS…YSTYEEECEA (145 aa). The tract at residues 549–930 is carbamoyl phosphate synthetic domain; that stretch reads RPSDRKKVMI…AYYKAQLGAG (382 aa). In terms of domain architecture, ATP-grasp 2 spans 673–864; sequence QKVLNDLGLR…LAKVGARCMA (192 aa). Positions 709, 748, 750, 755, 780, 781, 782, 783, 823, and 835 each coordinate ATP. 3 residues coordinate Mg(2+): Gln-823, Glu-835, and Asn-837. Gln-823, Glu-835, and Asn-837 together coordinate Mn(2+). Positions 931-1071 constitute an MGS-like domain; it reads ERLNPTGKIF…ELHGRLKNRS (141 aa). The tract at residues 931–1071 is allosteric domain; sequence ERLNPTGKIF…ELHGRLKNRS (141 aa).

It belongs to the CarB family. As to quaternary structure, composed of two chains; the small (or glutamine) chain promotes the hydrolysis of glutamine to ammonia, which is used by the large (or ammonia) chain to synthesize carbamoyl phosphate. Tetramer of heterodimers (alpha,beta)4. The cofactor is Mg(2+). Mn(2+) is required as a cofactor.

It catalyses the reaction hydrogencarbonate + L-glutamine + 2 ATP + H2O = carbamoyl phosphate + L-glutamate + 2 ADP + phosphate + 2 H(+). It carries out the reaction hydrogencarbonate + NH4(+) + 2 ATP = carbamoyl phosphate + 2 ADP + phosphate + 2 H(+). It functions in the pathway amino-acid biosynthesis; L-arginine biosynthesis; carbamoyl phosphate from bicarbonate: step 1/1. Its pathway is pyrimidine metabolism; UMP biosynthesis via de novo pathway; (S)-dihydroorotate from bicarbonate: step 1/3. In terms of biological role, large subunit of the glutamine-dependent carbamoyl phosphate synthetase (CPSase). CPSase catalyzes the formation of carbamoyl phosphate from the ammonia moiety of glutamine, carbonate, and phosphate donated by ATP, constituting the first step of 2 biosynthetic pathways, one leading to arginine and/or urea and the other to pyrimidine nucleotides. The large subunit (synthetase) binds the substrates ammonia (free or transferred from glutamine from the small subunit), hydrogencarbonate and ATP and carries out an ATP-coupled ligase reaction, activating hydrogencarbonate by forming carboxy phosphate which reacts with ammonia to form carbamoyl phosphate. The sequence is that of Carbamoyl phosphate synthase large chain from Neisseria meningitidis serogroup A / serotype 4A (strain DSM 15465 / Z2491).